Consider the following 104-residue polypeptide: Ig lambda-2 chain C region (104 aa).

One can recognise an Ig-like domain in the interval P6 to S99. A disulfide bridge links C27 with C85.

The chain is Ig lambda-2 chain C region from Rattus norvegicus (Rat).